The following is a 73-amino-acid chain: Conotoxin Vc6.17 (73 aa).

The first 19 residues, 1–19, serve as a signal peptide directing secretion; that stretch reads MQKLIILLLVAAVLMSTQA. Positions 20–44 are excised as a propeptide; it reads LFQEKRRKEKIDLLSKRKTDAEKQH. Disulfide bonds link cysteine 48–cysteine 62, cysteine 55–cysteine 66, and cysteine 61–cysteine 71.

This sequence belongs to the conotoxin O2 superfamily. In terms of tissue distribution, expressed by the venom duct.

The protein resides in the secreted. Functionally, inhibits voltage-gated ion channels. The protein is Conotoxin Vc6.17 of Conus victoriae (Queen Victoria cone).